A 332-amino-acid polypeptide reads, in one-letter code: Ketol-acid reductoisomerase (NADP(+)) 1 (332 aa).

Residues 2-182 (AELFYDADAD…GGTRAGVIKT (181 aa)) enclose the KARI N-terminal Rossmann domain. NADP(+) contacts are provided by residues 25-28 (YGSQ), Ser-51, Ser-53, and 83-86 (DPIQ). His-108 is an active-site residue. Gly-134 lines the NADP(+) pocket. Positions 183-328 (TFTEETETDL…KELRKLMSWV (146 aa)) constitute a KARI C-terminal knotted domain. 4 residues coordinate Mg(2+): Asp-191, Glu-195, Glu-227, and Glu-231. Residue Ser-252 coordinates substrate.

The protein belongs to the ketol-acid reductoisomerase family. Mg(2+) serves as cofactor.

It catalyses the reaction (2R)-2,3-dihydroxy-3-methylbutanoate + NADP(+) = (2S)-2-acetolactate + NADPH + H(+). The enzyme catalyses (2R,3R)-2,3-dihydroxy-3-methylpentanoate + NADP(+) = (S)-2-ethyl-2-hydroxy-3-oxobutanoate + NADPH + H(+). Its pathway is amino-acid biosynthesis; L-isoleucine biosynthesis; L-isoleucine from 2-oxobutanoate: step 2/4. It participates in amino-acid biosynthesis; L-valine biosynthesis; L-valine from pyruvate: step 2/4. Functionally, involved in the biosynthesis of branched-chain amino acids (BCAA). Catalyzes an alkyl-migration followed by a ketol-acid reduction of (S)-2-acetolactate (S2AL) to yield (R)-2,3-dihydroxy-isovalerate. In the isomerase reaction, S2AL is rearranged via a Mg-dependent methyl migration to produce 3-hydroxy-3-methyl-2-ketobutyrate (HMKB). In the reductase reaction, this 2-ketoacid undergoes a metal-dependent reduction by NADPH to yield (R)-2,3-dihydroxy-isovalerate. The polypeptide is Ketol-acid reductoisomerase (NADP(+)) 1 (Streptomyces coelicolor (strain ATCC BAA-471 / A3(2) / M145)).